We begin with the raw amino-acid sequence, 305 residues long: GTP cyclohydrolase FolE2 (305 aa).

It belongs to the GTP cyclohydrolase IV family.

The catalysed reaction is GTP + H2O = 7,8-dihydroneopterin 3'-triphosphate + formate + H(+). It functions in the pathway cofactor biosynthesis; 7,8-dihydroneopterin triphosphate biosynthesis; 7,8-dihydroneopterin triphosphate from GTP: step 1/1. Converts GTP to 7,8-dihydroneopterin triphosphate. The chain is GTP cyclohydrolase FolE2 from Xanthomonas euvesicatoria pv. vesicatoria (strain 85-10) (Xanthomonas campestris pv. vesicatoria).